The chain runs to 346 residues: Heat-inducible transcription repressor HrcA (346 aa).

Belongs to the HrcA family.

In terms of biological role, negative regulator of class I heat shock genes (grpE-dnaK-dnaJ and groELS operons). Prevents heat-shock induction of these operons. This is Heat-inducible transcription repressor HrcA from Erythrobacter litoralis (strain HTCC2594).